The primary structure comprises 243 residues: Venom nerve growth factor 1 (243 aa).

The signal sequence occupies residues 1–18 (MSMLCYTLIIAFLIGIWA). A propeptide spanning residues 19-125 (APKSEDNVPL…TLNRNIRAKR (107 aa)) is cleaved from the precursor. Basic and acidic residues predominate over residues 47 to 66 (GLKTSRNTDQRHPAPKKAED). The tract at residues 47–69 (GLKTSRNTDQRHPAPKKAEDQEL) is disordered. Disulfide bonds link Cys139-Cys204, Cys182-Cys232, and Cys192-Cys234. A glycan (N-linked (GlcNAc...) asparagine) is linked at Asn148.

It belongs to the NGF-beta family. Homodimer; non-covalently linked. In terms of tissue distribution, expressed by the venom gland.

The protein resides in the secreted. Functionally, nerve growth factor is important for the development and maintenance of the sympathetic and sensory nervous systems. It stimulates division and differentiation of sympathetic and embryonic sensory neurons as well as basal forebrain cholinergic neurons in the brain. Its relevance in the snake venom is not clear. However, it has been shown to inhibit metalloproteinase-dependent proteolysis of platelet glycoprotein Ib alpha, suggesting a metalloproteinase inhibition to prevent metalloprotease autodigestion and/or protection against prey proteases. Binds a lipid between the two protein chains in the homodimer. The lipid-bound form promotes histamine relase from mouse mast cells, contrary to the lipid-free form. This chain is Venom nerve growth factor 1, found in Oxyuranus microlepidotus (Inland taipan).